Here is a 623-residue protein sequence, read N- to C-terminus: Vacuolar-sorting receptor 1 (623 aa).

A signal peptide spans Met1 to Ala22. The Lumenal segment spans residues Arg23–Thr564. The PA domain maps to Gln54 to Ile163. Asn143 carries N-linked (GlcNAc...) asparagine glycosylation. EGF-like domains follow at residues Glu411–Glu461 and Gly464–Glu511. Disulfide bonds link Cys415–Cys433, Cys422–Cys442, Cys444–Cys460, Cys468–Cys488, Cys475–Cys496, and Cys498–Cys510. The EGF-like 3; calcium-binding domain occupies Asp512–Ile554. Asn537 carries an N-linked (GlcNAc...) asparagine glycan. An intrachain disulfide couples Cys540 to Cys553. Residues Trp565–Val585 traverse the membrane as a helical segment. Over Tyr586–Gly623 the chain is Cytoplasmic. A Tyrosine-based internalization motif motif is present at residues Tyr605 to Leu608.

The protein belongs to the VSR (BP-80) family. In terms of assembly, interacts with the N-terminal propeptide of aleurein (proaleurein).

It localises to the membrane. It is found in the golgi apparatus membrane. The protein resides in the cytoplasmic vesicle. Its subcellular location is the clathrin-coated vesicle membrane. The protein localises to the prevacuolar compartment membrane. Functionally, vacuolar-sorting receptor (VSR) involved in clathrin-coated vesicles sorting from Golgi apparatus to vacuoles. Seems to binds preferentially proteins containing a N-terminal NPIR motif. This chain is Vacuolar-sorting receptor 1 (BP80), found in Pisum sativum (Garden pea).